Here is a 445-residue protein sequence, read N- to C-terminus: Serine--tRNA ligase (445 aa).

Residue 250-252 (TAE) coordinates L-serine. Residue 281-283 (RAE) participates in ATP binding. L-serine is bound at residue Glu-304. 368–371 (EISS) contributes to the ATP binding site. Ser-404 provides a ligand contact to L-serine.

This sequence belongs to the class-II aminoacyl-tRNA synthetase family. Type-1 seryl-tRNA synthetase subfamily. As to quaternary structure, homodimer. The tRNA molecule binds across the dimer.

The protein localises to the cytoplasm. It catalyses the reaction tRNA(Ser) + L-serine + ATP = L-seryl-tRNA(Ser) + AMP + diphosphate + H(+). The enzyme catalyses tRNA(Sec) + L-serine + ATP = L-seryl-tRNA(Sec) + AMP + diphosphate + H(+). The protein operates within aminoacyl-tRNA biosynthesis; selenocysteinyl-tRNA(Sec) biosynthesis; L-seryl-tRNA(Sec) from L-serine and tRNA(Sec): step 1/1. Catalyzes the attachment of serine to tRNA(Ser). Is also able to aminoacylate tRNA(Sec) with serine, to form the misacylated tRNA L-seryl-tRNA(Sec), which will be further converted into selenocysteinyl-tRNA(Sec). The sequence is that of Serine--tRNA ligase from Azorhizobium caulinodans (strain ATCC 43989 / DSM 5975 / JCM 20966 / LMG 6465 / NBRC 14845 / NCIMB 13405 / ORS 571).